A 511-amino-acid chain; its full sequence is Maturase K (511 aa).

It belongs to the intron maturase 2 family. MatK subfamily.

The protein localises to the plastid. Its subcellular location is the chloroplast. In terms of biological role, usually encoded in the trnK tRNA gene intron. Probably assists in splicing its own and other chloroplast group II introns. This chain is Maturase K, found in Bromus inermis (Smooth brome grass).